The sequence spans 131 residues: Profilin-7 (131 aa).

A disulfide bond links cysteine 13 and cysteine 115. Residues 81–97 (AVIRGKKGAGGITIKKT) carry the Involved in PIP2 interaction motif. Threonine 111 is modified (phosphothreonine).

This sequence belongs to the profilin family. As to quaternary structure, occurs in many kinds of cells as a complex with monomeric actin in a 1:1 ratio. Post-translationally, phosphorylated by MAP kinases.

It localises to the cytoplasm. It is found in the cytoskeleton. Functionally, binds to actin and affects the structure of the cytoskeleton. At high concentrations, profilin prevents the polymerization of actin, whereas it enhances it at low concentrations. This Olea europaea (Common olive) protein is Profilin-7.